A 1382-amino-acid polypeptide reads, in one-letter code: Hepatocyte growth factor receptor (1382 aa).

A signal peptide spans 1–24 (MRAPAVLAPGILVLLFTLVQRSCG). Over 25–933 (ECKEALVKSE…VIVQPDQNFT (909 aa)) the chain is Extracellular. In terms of domain architecture, Sema spans 27 to 516 (KEALVKSEMN…TGKKITKIPL (490 aa)). Asn-45 carries an N-linked (GlcNAc...) asparagine glycan. Intrachain disulfides connect Cys-95–Cys-101, Cys-98–Cys-160, Cys-133–Cys-141, and Cys-173–Cys-176. Asn-106 is a glycosylation site (N-linked (GlcNAc...) asparagine). N-linked (GlcNAc...) asparagine glycosylation is found at Asn-203 and Asn-359. 2 cysteine pairs are disulfide-bonded: Cys-299–Cys-364 and Cys-386–Cys-398. 2 N-linked (GlcNAc...) asparagine glycosylation sites follow: Asn-400 and Asn-406. 4 disulfide bridges follow: Cys-521-Cys-539, Cys-527-Cys-562, Cys-530-Cys-546, and Cys-542-Cys-552. IPT/TIG domains lie at 564 to 656 (PTIY…FSYV), 658 to 740 (PIIT…FSYQ), and 743 to 837 (PIVY…LIYV). An O-linked (Man) threonine glycan is attached at Thr-583. N-linked (GlcNAc...) asparagine glycans are attached at residues Asn-608 and Asn-636. Residues Thr-677 and Thr-762 are each glycosylated (O-linked (Man) threonine). Asn-786, Asn-880, and Asn-931 each carry an N-linked (GlcNAc...) asparagine glycan. The chain crosses the membrane as a helical span at residues 934–956 (GLIVGVISISLIVLLLLGLFLWL). The Cytoplasmic segment spans residues 957 to 1382 (KRRKQIKDLG…QDIIDGEGDT (426 aa)). The residue at position 967 (Ser-967) is a Phosphoserine. The residue at position 978 (Thr-978) is a Phosphothreonine. Ser-991, Ser-998, and Ser-1001 each carry phosphoserine. Tyr-1004 carries the phosphotyrosine modification. Positions 1079–1346 (VHFNEVIGRG…RISAIFSTFI (268 aa)) constitute a Protein kinase domain. ATP-binding positions include 1085 to 1093 (IGRGHFGCV) and Lys-1111. Asp-1205 serves as the catalytic Proton acceptor. The tract at residues 1213-1382 (LDEKFTVKVA…QDIIDGEGDT (170 aa)) is interaction with RANBP9. The residue at position 1231 (Tyr-1231) is a Phosphotyrosine. Tyr-1235 and Tyr-1236 each carry phosphotyrosine; by autocatalysis. The residue at position 1290 (Thr-1290) is a Phosphothreonine. The interval 1321 to 1360 (WHPKAELRPSFSELVSRISAIFSTFIGEHYVHVNATYVNV) is interaction with MUC20. A phosphotyrosine; by autocatalysis mark is found at Tyr-1350 and Tyr-1357. Residue Tyr-1366 is modified to Phosphotyrosine.

It belongs to the protein kinase superfamily. Tyr protein kinase family. Heterodimer made of an alpha chain (50 kDa) and a beta chain (145 kDa) which are disulfide linked. Binds PLXNB1. Interacts when phosphorylated with downstream effectors including STAT3, PIK3R1, SRC, PCLG1, GRB2 and GAB1. Interacts with SPSB1, SPSB2 and SPSB4. Interacts with INPP5D/SHIP1. When phosphorylated at Tyr-1357, interacts with INPPL1/SHIP2. Interacts with RANBP9 and RANBP10, as well as SPSB1, SPSB2, SPSB3 and SPSB4. SPSB1 binding occurs in the presence and in the absence of HGF, however HGF treatment has a positive effect on this interaction. Interacts with MUC20; prevents interaction with GRB2 and suppresses hepatocyte growth factor-induced cell proliferation. Interacts with GRB10. Interacts with PTPN1 and PTPN2. Interacts with HSP90AA1 and HSP90AB1; the interaction suppresses MET kinase activity. Interacts with tensin TNS3. Interacts (when phosphorylated) with tensin TNS4 (via SH2 domain); the interaction increases MET protein stability by inhibiting MET endocytosis and subsequent lysosomal degradation. Post-translationally, autophosphorylated in response to ligand binding on Tyr-1235 and Tyr-1236 in the kinase domain leading to further phosphorylation of Tyr-1350 and Tyr-1357 in the C-terminal multifunctional docking site. Dephosphorylated by PTPRJ at Tyr-1350 and Tyr-1366. Dephosphorylated by PTPN1 and PTPN2. Ubiquitinated. Ubiquitination by CBL regulates the receptor stability and activity through proteasomal degradation. In terms of processing, O-mannosylation of IPT/TIG domains by TMEM260 is required for protein maturation. O-mannosylated residues are composed of single mannose glycans that are not elongated or modified.

Its subcellular location is the membrane. It carries out the reaction L-tyrosyl-[protein] + ATP = O-phospho-L-tyrosyl-[protein] + ADP + H(+). With respect to regulation, in its inactive state, the C-terminal tail interacts with the catalytic domain and inhibits the kinase activity. Upon ligand binding, the C-terminal tail is displaced and becomes phosphorylated, thus increasing the kinase activity. Its function is as follows. Receptor tyrosine kinase that transduces signals from the extracellular matrix into the cytoplasm by binding to hepatocyte growth factor/HGF ligand. Regulates many physiological processes including proliferation, scattering, morphogenesis and survival. Ligand binding at the cell surface induces autophosphorylation of MET on its intracellular domain that provides docking sites for downstream signaling molecules. Following activation by ligand, interacts with the PI3-kinase subunit PIK3R1, PLCG1, SRC, GRB2, STAT3 or the adapter GAB1. Recruitment of these downstream effectors by MET leads to the activation of several signaling cascades including the RAS-ERK, PI3 kinase-AKT, or PLCgamma-PKC. The RAS-ERK activation is associated with the morphogenetic effects while PI3K/AKT coordinates prosurvival effects. During embryonic development, MET signaling plays a role in gastrulation, development and migration of muscles and neuronal precursors, angiogenesis and kidney formation. In adults, participates in wound healing as well as organ regeneration and tissue remodeling. Also promotes differentiation and proliferation of hematopoietic cells. This is Hepatocyte growth factor receptor (MET) from Mustela putorius furo (European domestic ferret).